A 611-amino-acid polypeptide reads, in one-letter code: Protein halfway (611 aa).

Residues 1–22 (MLAYTHGTWLLLLLLLVAGACA) form the signal peptide. 3 disordered regions span residues 31-64 (DPAA…LKED), 90-132 (SLAE…AAPE), and 154-185 (GRAE…CQCR). A compositionally biased stretch (basic residues) spans 43–59 (AHAHPQARHHHHAHPHA). Positions 90-101 (SLAETQSMSDPG) are enriched in polar residues. Low complexity predominate over residues 102-123 (SVTDTTSTSTSHSTSTTSTTSP). The span at 159 to 183 (SEGQGSTVAQSEAQNRGGQGNSQCQ) shows a compositional bias: polar residues. Residues Asn-221, Asn-246, Asn-264, and Asn-269 are each glycosylated (N-linked (GlcNAc...) asparagine). 4 LRR repeats span residues 236 to 257 (SLQS…FPRL), 259 to 280 (ALKC…AVKD), 283 to 304 (HLEF…NQNK), and 313 to 334 (NMRM…NFLN). The region spanning 361–416 (ENRKRCVTNCPVIPNYGSCNCTLENIMIIQDNQSKPQCHVDCSNLGLVELPQRLPD) is the LRRNT domain. LRR repeat units follow at residues 417 to 438 (NTFM…FHTN), 443 to 464 (NINR…EGTK), and 468 to 489 (TFQR…FLNN). The LRRCT domain occupies 505–554 (NKLQCDCNSAKTLQNWLKERSSDIPDYMEIRCRNMPQRVIELQEAKLCQS).

Has a role in the ecdysone induced cascade; probably indirect control of 'late' ecdysone genes. This Drosophila melanogaster (Fruit fly) protein is Protein halfway.